Reading from the N-terminus, the 96-residue chain is Aspartyl/glutamyl-tRNA(Asn/Gln) amidotransferase subunit C (96 aa).

It belongs to the GatC family. Heterotrimer of A, B and C subunits.

It carries out the reaction L-glutamyl-tRNA(Gln) + L-glutamine + ATP + H2O = L-glutaminyl-tRNA(Gln) + L-glutamate + ADP + phosphate + H(+). The enzyme catalyses L-aspartyl-tRNA(Asn) + L-glutamine + ATP + H2O = L-asparaginyl-tRNA(Asn) + L-glutamate + ADP + phosphate + 2 H(+). Its function is as follows. Allows the formation of correctly charged Asn-tRNA(Asn) or Gln-tRNA(Gln) through the transamidation of misacylated Asp-tRNA(Asn) or Glu-tRNA(Gln) in organisms which lack either or both of asparaginyl-tRNA or glutaminyl-tRNA synthetases. The reaction takes place in the presence of glutamine and ATP through an activated phospho-Asp-tRNA(Asn) or phospho-Glu-tRNA(Gln). The protein is Aspartyl/glutamyl-tRNA(Asn/Gln) amidotransferase subunit C of Chloroflexus aggregans (strain MD-66 / DSM 9485).